Consider the following 149-residue polypeptide: Large ribosomal subunit protein bL9 (149 aa).

Belongs to the bacterial ribosomal protein bL9 family.

Its function is as follows. Binds to the 23S rRNA. The sequence is that of Large ribosomal subunit protein bL9 from Klebsiella pneumoniae (strain 342).